Reading from the N-terminus, the 201-residue chain is MKALTARQQQVYDLVRDHISQTGMPPTRAEIAARLGFRSPNAAEEHLKALARKGVIEIVAGASRGIRLLLEESGLPLIGRVAAGEPLLAQEHIESHYQVDPALFKPSADFLLRVSGMSMKDVGIMDGDLLAVHKTQNVRNGQIIVARIEDEVTVKRFKQTGNKVELLAENPEFKPIEVDLREQGLTIEGLAVGVIRNGNWS.

Positions 28-48 (RAEIAARLGFRSPNAAEEHLK) form a DNA-binding region, H-T-H motif. Catalysis depends on for autocatalytic cleavage activity residues Ser-118 and Lys-155.

It belongs to the peptidase S24 family. Homodimer.

It catalyses the reaction Hydrolysis of Ala-|-Gly bond in repressor LexA.. In terms of biological role, represses a number of genes involved in the response to DNA damage (SOS response), including recA and lexA. In the presence of single-stranded DNA, RecA interacts with LexA causing an autocatalytic cleavage which disrupts the DNA-binding part of LexA, leading to derepression of the SOS regulon and eventually DNA repair. The protein is LexA repressor of Photorhabdus laumondii subsp. laumondii (strain DSM 15139 / CIP 105565 / TT01) (Photorhabdus luminescens subsp. laumondii).